We begin with the raw amino-acid sequence, 326 residues long: Septum site-determining protein minD homolog, chloroplastic (326 aa).

A chloroplast-targeting transit peptide spans 1 to 62 (MASLRLFSTN…LAGETPRIVV (62 aa)). 67-74 (KGGVGKTT) serves as a coordination point for ATP.

This sequence belongs to the ParA family. MinD subfamily. Homodimer. Interacts with MINE1. Binds to ARC3. Interacts with MCD1. Interacts with CDP1/PARC6.

The protein resides in the plastid. It localises to the chloroplast inner membrane. Its activity is regulated as follows. Stimulated ATPase activity by MINE1. In terms of biological role, together with ARC3 and MCD1, regulates FtsZ ring positioning in chloroplasts in an ARC6-dependent manner. Calcium-dependent ATPase required for the correct placement of the plastid division site. Inhibits FtsZ filament and ring formation in the plastid. Mediates inhibition of plastid division. In cooperation with MINE1, prevents FtsZ ring formation anywhere outside of the mid-plastids. This chain is Septum site-determining protein minD homolog, chloroplastic, found in Arabidopsis thaliana (Mouse-ear cress).